Reading from the N-terminus, the 1050-residue chain is Self-sufficient cytochrome P450 monooxygenase CYP505E5 (1050 aa).

C405 provides a ligand contact to heme. Positions 461-495 (TATGLSRRSMLVARDGSSEESSNHPAEARGDHAPA) are disordered. The 142-residue stretch at 500–641 (VSFFYGSNSG…DLEAWEETSL (142 aa)) folds into the Flavodoxin-like domain. FMN-binding positions include 506 to 510 (SNSGT) and 585 to 617 (VFGC…TRLA). Positions 679 to 907 (KGLIEAKVTA…RPAKETFHLP (229 aa)) constitute an FAD-binding FR-type domain.

The protein in the N-terminal section; belongs to the cytochrome P450 family. The cofactor is FAD. Requires FMN as cofactor. Heme is required as a cofactor.

It catalyses the reaction 2 oxidized [cytochrome P450] + NADPH = 2 reduced [cytochrome P450] + NADP(+) + H(+). The catalysed reaction is an organic molecule + reduced [NADPH--hemoprotein reductase] + O2 = an alcohol + oxidized [NADPH--hemoprotein reductase] + H2O + H(+). The enzyme catalyses dodecanoate + reduced [NADPH--hemoprotein reductase] + O2 = 5-hydroxydodecanoate + oxidized [NADPH--hemoprotein reductase] + H2O + H(+). It carries out the reaction tetradecanoate + reduced [NADPH--hemoprotein reductase] + O2 = 7-hydroxytetradecanoate + oxidized [NADPH--hemoprotein reductase] + H2O + H(+). It catalyses the reaction dodecan-1-ol + reduced [NADPH--hemoprotein reductase] + O2 = 1,5-dodecanediol + oxidized [NADPH--hemoprotein reductase] + H2O + H(+). The catalysed reaction is dodecan-1-ol + reduced [NADPH--hemoprotein reductase] + O2 = 1,4-dodecanediol + oxidized [NADPH--hemoprotein reductase] + H2O + H(+). The enzyme catalyses dodecan-1-ol + reduced [NADPH--hemoprotein reductase] + O2 = 1,6-dodecanediol + oxidized [NADPH--hemoprotein reductase] + H2O + H(+). Its function is as follows. Self-sufficient cytochrome P450 monooxygenase that catalyzes the regioselective in-chain hydroxylation of alkanes, fatty alcohols, and fatty acids at the omega-7 position. Performs hydroxylation of C10-C16 n-alkanes and C12 and C14 fatty alcohols; and thereby enables the one step biocatalytic synthesis of rare alcohols such as 5-dodecanol and 7-tetradecanol. Converts 1-dodecanol into 1,5-dodecanediol as major product with very little sub-terminally hydroxylated products with the 1,4-dodecanediol and 1,6-dodecanediol more abundant. Converts dodecanoic acid to 5-hydroxydodecanoic acid which can be further converted into delta-dodecalactone by lactonization of the 5-hydroxy acid at low pH. Also gives sub-terminal hydroxylation of dodecanoic acid with 9-hydroxydodecanoic acid being the second most abundant product. The protein is Self-sufficient cytochrome P450 monooxygenase CYP505E5 of Aspergillus kawachii (strain NBRC 4308) (White koji mold).